We begin with the raw amino-acid sequence, 427 residues long: Phosphoribosylamine--glycine ligase (427 aa).

Residues 107 to 312 form the ATP-grasp domain; sequence KDLCARFNIP…LLALVNAAVD (206 aa). 133 to 193 is a binding site for ATP; sequence IRQQGAPIVV…EEFLDGEEAS (61 aa). The Mg(2+) site is built by glutamate 282 and asparagine 284.

The protein belongs to the GARS family. Requires Mg(2+) as cofactor. Mn(2+) serves as cofactor.

The catalysed reaction is 5-phospho-beta-D-ribosylamine + glycine + ATP = N(1)-(5-phospho-beta-D-ribosyl)glycinamide + ADP + phosphate + H(+). Its pathway is purine metabolism; IMP biosynthesis via de novo pathway; N(1)-(5-phospho-D-ribosyl)glycinamide from 5-phospho-alpha-D-ribose 1-diphosphate: step 2/2. The sequence is that of Phosphoribosylamine--glycine ligase from Brucella melitensis biotype 1 (strain ATCC 23456 / CCUG 17765 / NCTC 10094 / 16M).